The primary structure comprises 410 residues: LL-diaminopimelate aminotransferase (410 aa).

Substrate contacts are provided by Tyr-15 and Gly-42. Residues Tyr-72, 108 to 109 (SK), Tyr-132, Asn-187, Tyr-218, and 246 to 248 (SFS) contribute to the pyridoxal 5'-phosphate site. Residues Lys-109, Tyr-132, and Asn-187 each contribute to the substrate site. Position 249 is an N6-(pyridoxal phosphate)lysine (Lys-249). Residues Arg-257 and Asn-292 each contribute to the pyridoxal 5'-phosphate site. Asn-292 and Arg-388 together coordinate substrate.

Belongs to the class-I pyridoxal-phosphate-dependent aminotransferase family. LL-diaminopimelate aminotransferase subfamily. Homodimer. Requires pyridoxal 5'-phosphate as cofactor.

The catalysed reaction is (2S,6S)-2,6-diaminopimelate + 2-oxoglutarate = (S)-2,3,4,5-tetrahydrodipicolinate + L-glutamate + H2O + H(+). The protein operates within amino-acid biosynthesis; L-lysine biosynthesis via DAP pathway; LL-2,6-diaminopimelate from (S)-tetrahydrodipicolinate (aminotransferase route): step 1/1. Involved in the synthesis of meso-diaminopimelate (m-DAP or DL-DAP), required for both lysine and peptidoglycan biosynthesis. Catalyzes the direct conversion of tetrahydrodipicolinate to LL-diaminopimelate. The chain is LL-diaminopimelate aminotransferase from Geotalea daltonii (strain DSM 22248 / JCM 15807 / FRC-32) (Geobacter daltonii).